The following is a 368-amino-acid chain: Probable dual-specificity RNA methyltransferase RlmN (368 aa).

The active-site Proton acceptor is the glutamate 108. One can recognise a Radical SAM core domain in the interval 114–345 (HAYGNSVCVS…VTVRRGLGAD (232 aa)). Cysteine 121 and cysteine 350 are oxidised to a cystine. Residues cysteine 128, cysteine 132, and cysteine 135 each coordinate [4Fe-4S] cluster. S-adenosyl-L-methionine contacts are provided by residues 175 to 176 (GE), serine 207, 230 to 232 (SLH), and asparagine 307. Catalysis depends on cysteine 350, which acts as the S-methylcysteine intermediate.

Belongs to the radical SAM superfamily. RlmN family. [4Fe-4S] cluster serves as cofactor.

It localises to the cytoplasm. It catalyses the reaction adenosine(2503) in 23S rRNA + 2 reduced [2Fe-2S]-[ferredoxin] + 2 S-adenosyl-L-methionine = 2-methyladenosine(2503) in 23S rRNA + 5'-deoxyadenosine + L-methionine + 2 oxidized [2Fe-2S]-[ferredoxin] + S-adenosyl-L-homocysteine. The catalysed reaction is adenosine(37) in tRNA + 2 reduced [2Fe-2S]-[ferredoxin] + 2 S-adenosyl-L-methionine = 2-methyladenosine(37) in tRNA + 5'-deoxyadenosine + L-methionine + 2 oxidized [2Fe-2S]-[ferredoxin] + S-adenosyl-L-homocysteine. In terms of biological role, specifically methylates position 2 of adenine 2503 in 23S rRNA and position 2 of adenine 37 in tRNAs. This Pelotomaculum thermopropionicum (strain DSM 13744 / JCM 10971 / SI) protein is Probable dual-specificity RNA methyltransferase RlmN.